The following is a 311-amino-acid chain: ATP synthase subunit gamma, mitochondrial (311 aa).

A mitochondrion-targeting transit peptide spans 1 to 33 (MLSRIVSNNATRSVMCHQAQVGILYKTNPVRTY).

Belongs to the ATPase gamma chain family. In terms of assembly, F-type ATPases have 2 components, CF(1) - the catalytic core - and CF(0) - the membrane proton channel. CF(1) has five subunits: alpha(3), beta(3), gamma(1), delta(1), epsilon(1). CF(0) has three main subunits: a, b and c.

It localises to the mitochondrion. It is found in the mitochondrion inner membrane. Functionally, mitochondrial membrane ATP synthase (F(1)F(0) ATP synthase or Complex V) produces ATP from ADP in the presence of a proton gradient across the membrane which is generated by electron transport complexes of the respiratory chain. F-type ATPases consist of two structural domains, F(1) - containing the extramembraneous catalytic core, and F(0) - containing the membrane proton channel, linked together by a central stalk and a peripheral stalk. During catalysis, ATP synthesis in the catalytic domain of F(1) is coupled via a rotary mechanism of the central stalk subunits to proton translocation. Part of the complex F(1) domain and the central stalk which is part of the complex rotary element. The gamma subunit protrudes into the catalytic domain formed of alpha(3)beta(3). Rotation of the central stalk against the surrounding alpha(3)beta(3) subunits leads to hydrolysis of ATP in three separate catalytic sites on the beta subunits. This Saccharomyces cerevisiae (strain ATCC 204508 / S288c) (Baker's yeast) protein is ATP synthase subunit gamma, mitochondrial (ATP3).